The following is a 338-amino-acid chain: Thiamine thiazole synthase (338 aa).

A disordered region spans residues 1 to 43 (MSPVATESMYKPTTINQTAHQQAMDPLKSKQQSNATVNKPAFK). Positions 11–21 (KPTTINQTAHQ) are enriched in polar residues. Substrate-binding positions include Ala91, 112–113 (ES), Gly120, and Cys185. The residue at position 221 (Cys221) is a 2,3-didehydroalanine (Cys). Residues Asp223, His238, Met290, and 300-302 (RMG) each bind substrate.

The protein belongs to the THI4 family. Homooctamer. Fe cation is required as a cofactor. In terms of processing, during the catalytic reaction, a sulfide is transferred from Cys-221 to a reaction intermediate, generating a dehydroalanine residue. As to expression, highly expressed in haustoria, and only in low amounts in intercellular hyphae. Found in the basal hyphae of the uredia, but not in the pedicels and only at very low levels in uredospores.

It localises to the cytoplasm. The protein resides in the nucleus. It carries out the reaction [ADP-thiazole synthase]-L-cysteine + glycine + NAD(+) = [ADP-thiazole synthase]-dehydroalanine + ADP-5-ethyl-4-methylthiazole-2-carboxylate + nicotinamide + 3 H2O + 2 H(+). In terms of biological role, involved in biosynthesis of the thiamine precursor thiazole. Catalyzes the conversion of NAD and glycine to adenosine diphosphate 5-(2-hydroxyethyl)-4-methylthiazole-2-carboxylic acid (ADT), an adenylated thiazole intermediate. The reaction includes an iron-dependent sulfide transfer from a conserved cysteine residue of the protein to a thiazole intermediate. The enzyme can only undergo a single turnover, which suggests it is a suicide enzyme. May have additional roles in adaptation to various stress conditions and in DNA damage tolerance. The sequence is that of Thiamine thiazole synthase (THI2) from Uromyces fabae (Rust fungus).